Here is a 255-residue protein sequence, read N- to C-terminus: Tryptophan synthase alpha chain (255 aa).

Residues Glu49 and Asp60 each act as proton acceptor in the active site.

Belongs to the TrpA family. In terms of assembly, tetramer of two alpha and two beta chains.

It carries out the reaction (1S,2R)-1-C-(indol-3-yl)glycerol 3-phosphate + L-serine = D-glyceraldehyde 3-phosphate + L-tryptophan + H2O. It functions in the pathway amino-acid biosynthesis; L-tryptophan biosynthesis; L-tryptophan from chorismate: step 5/5. Its function is as follows. The alpha subunit is responsible for the aldol cleavage of indoleglycerol phosphate to indole and glyceraldehyde 3-phosphate. In Desulfovibrio desulfuricans (strain ATCC 27774 / DSM 6949 / MB), this protein is Tryptophan synthase alpha chain.